Here is a 414-residue protein sequence, read N- to C-terminus: MSVQTIQSESFIEEKRRITVLLDRDGRSVEEKVVNRDGVITIPNQSGHVQDRAVLFVPQLASRPDFIHISWKRNAEADITPIKSYIPYGFNIFTNSSGSIAKFIDTPVGKVYYSDTFEDNALSKWFPPEFVDQLLRYSEDNDLDITVTRGRVEVNRYYELTDDNLFPLNGTESVKTEAGIFQVDTEDDTDTSLSGLRCTWHTGSGALNKCQRTLFFYNQIYADKSSLSEVSLTLSEPVNLHPVVQIDLTSKRPIHNCEYYAYFNLPKYFFIDQFQSIPTLLFGEHDLELPEYKLSGFGSISLFTLQPGSINEVTLHSRYIKPTNDGSAFFEAAFTPQVFYACDTSIELTKRSPFYTGKIGYEHFFTDNTKFYYLNSTKMTINLPKLDSSDNLCIQLFTLGLVLFSVLYLIRKLF.

Over 1 to 390 (MSVQTIQSES…INLPKLDSSD (390 aa)) the chain is Lumenal. Residues Asn-44, Asn-95, Asn-169, and Asn-375 are each glycosylated (N-linked (GlcNAc...) asparagine). A helical membrane pass occupies residues 391 to 410 (NLCIQLFTLGLVLFSVLYLI). Over 411–414 (RKLF) the chain is Cytoplasmic.

This sequence belongs to the PIGX family.

The protein localises to the endoplasmic reticulum membrane. The protein operates within glycolipid biosynthesis; glycosylphosphatidylinositol-anchor biosynthesis. Required for proper folding and/or the stability of a subset of proteins in the endoplasmic reticulum. Component of glycosylphosphatidylinositol-mannosyltransferase 1 which transfers the first of the 4 mannoses in the GPI-anchor precursors during GPI-anchor biosynthesis. Probably acts by stabilizing the mannosyltransferase GPI14. This chain is Protein PBN1 (PBN1), found in Kluyveromyces lactis (strain ATCC 8585 / CBS 2359 / DSM 70799 / NBRC 1267 / NRRL Y-1140 / WM37) (Yeast).